The following is a 1044-amino-acid chain: MFKKVESKVNFPKIEEKVLKFWNDNKIFEKSMQQREGCEEFTFYDGPPFATGLPHFGHFVPNTIKDIIPRYKTMKGKHVKRYFGWDTHGLPVEYEVEKSLQISGRYEIEKYGVDKFNEECKNIVLRYTKEWQKTISRLGRWVDFEHNYKTMDTTFMESVWWVFQTLYNKGLIYESYYVLPYSPKLATPLSNFEVNLGEYKEVHDPSLTIKFKIKDKNEYLLAWTTTPWTLPTNLGIAVGRDIDYSKIFDKEKNETFIIGTKRLNHYYKDDKTYTVIEQFKGEHIKGIEYEPVFDYFLSQRNKGAFRIHTAEYVTTDDGTGIVHIAPFGEEDYNILKKNTKTDMITPIDAECRFTNEVKDFEGLFVKDADNKIIEKLKSMNLLFKRENFLHRYPFCYRTNSPLIYRPISSWFVNIEAIKEKLIKSNEQINWIPSHLKKGRFGKWLENARDWAISRNRFWGNPIPVWICSKTGNKICIGSKEELERLSGQKVNDLHKDKIDKITWPSQYGGTYVRTSEVLDCWFESGSMPYASKHYPFKDKDKFHDIFPADFIAEGLDQTRGWFYTLTILGTALFEQTAFKNVIVNGLVLSSDGRKMSKSLRNYTDPMEVINTFGADALRLYLVMSPVVRADDLKYSDDGVKDVLKNIIIPIWNAYSFFITYAIIDKFEPNSNIVLYKTNILDKWIISEIESLKKTLNEEIDKYNLTKSIEELLAFIDKLNNWYIRRSRRRFWKSENDNDKIDAYETLYYALKNLMLMLAPFIPFLTEEIYQNLKTKDEKESIHLNEYPQEIKELINIDLEEKMNFIRKVVSIARALRASHNIKIRKPISTIYIVTKDQKEQQILSEMKEIILEEINSEEIKIKSNEEELVTYKAKANFRELGSKLGTNMKAVALEIMKLNNEDILKIINGNKHTIKIKDNTYDITLKDIILERHEKENLKVINEDSVTIGLDALITEELYLKGLSRELIRKVQNLRKENNFNVSDRIILYIDNNEILKKIISQFESYIKNETLTLKIEINNEKALTKVELDDEILIKIGIEKWSN.

Residues 48–58 (PFATGLPHFGH) carry the 'HIGH' region motif. Positions 594 to 598 (KMSKS) match the 'KMSKS' region motif. Lysine 597 contacts ATP.

Belongs to the class-I aminoacyl-tRNA synthetase family. IleS type 2 subfamily. In terms of assembly, monomer. Requires Zn(2+) as cofactor.

Its subcellular location is the cytoplasm. The enzyme catalyses tRNA(Ile) + L-isoleucine + ATP = L-isoleucyl-tRNA(Ile) + AMP + diphosphate. In terms of biological role, catalyzes the attachment of isoleucine to tRNA(Ile). As IleRS can inadvertently accommodate and process structurally similar amino acids such as valine, to avoid such errors it has two additional distinct tRNA(Ile)-dependent editing activities. One activity is designated as 'pretransfer' editing and involves the hydrolysis of activated Val-AMP. The other activity is designated 'posttransfer' editing and involves deacylation of mischarged Val-tRNA(Ile). This is Isoleucine--tRNA ligase from Borrelia hermsii (strain HS1 / DAH).